Consider the following 383-residue polypeptide: Flagellum-associated coiled-coil domain-containing protein 1 (383 aa).

The disordered stretch occupies residues Pro26–Ser79. The span at Ser51 to Ala77 shows a compositional bias: polar residues. 2 coiled-coil regions span residues Thr125–Ser220 and Lys276–Lys359. Lys354 carries the post-translational modification N6-acetyllysine.

In terms of tissue distribution, isoform 1 is specific to germ cells of the testis and localizes to the principal piece of the sperm flagellum. Isoform 2 seems to be expressed mainly in somatic cells of the testis, and is not detected in mature spermatozoa (at protein level). Isoform 2 may also be expressed weakly in brain.

It is found in the cytoplasm. The protein resides in the cytoplasmic granule. Its subcellular location is the cell projection. The protein localises to the cilium. It localises to the flagellum. This is Flagellum-associated coiled-coil domain-containing protein 1 from Mus musculus (Mouse).